The following is a 60-amino-acid chain: Small ribosomal subunit protein bS21 (60 aa).

The segment at 35-60 is disordered; the sequence is REHYEKPSVKRKKKSEAARRRKSKVR. The span at 43–60 shows a compositional bias: basic residues; it reads VKRKKKSEAARRRKSKVR.

The protein belongs to the bacterial ribosomal protein bS21 family.

The protein is Small ribosomal subunit protein bS21 of Clostridium novyi (strain NT).